A 351-amino-acid polypeptide reads, in one-letter code: Probable dual-specificity RNA methyltransferase RlmN (351 aa).

E102 serves as the catalytic Proton acceptor. The Radical SAM core domain maps to 110 to 339; it reads DGGRKTICIS…ILNRRSPGKD (230 aa). A disulfide bond links C117 and C344. [4Fe-4S] cluster-binding residues include C124, C128, and C131. S-adenosyl-L-methionine-binding positions include 171–172, S203, 226–228, and N302; these read GE and SLN. C344 acts as the S-methylcysteine intermediate in catalysis.

The protein belongs to the radical SAM superfamily. RlmN family. [4Fe-4S] cluster serves as cofactor.

Its subcellular location is the cytoplasm. The enzyme catalyses adenosine(2503) in 23S rRNA + 2 reduced [2Fe-2S]-[ferredoxin] + 2 S-adenosyl-L-methionine = 2-methyladenosine(2503) in 23S rRNA + 5'-deoxyadenosine + L-methionine + 2 oxidized [2Fe-2S]-[ferredoxin] + S-adenosyl-L-homocysteine. The catalysed reaction is adenosine(37) in tRNA + 2 reduced [2Fe-2S]-[ferredoxin] + 2 S-adenosyl-L-methionine = 2-methyladenosine(37) in tRNA + 5'-deoxyadenosine + L-methionine + 2 oxidized [2Fe-2S]-[ferredoxin] + S-adenosyl-L-homocysteine. Functionally, specifically methylates position 2 of adenine 2503 in 23S rRNA and position 2 of adenine 37 in tRNAs. This chain is Probable dual-specificity RNA methyltransferase RlmN, found in Leptospira borgpetersenii serovar Hardjo-bovis (strain JB197).